We begin with the raw amino-acid sequence, 300 residues long: 3-dehydrocarnitine:acetyl-CoA trimethylamine transferase (300 aa).

3 residues coordinate Zn(2+): His-51, His-53, and Glu-254.

The protein belongs to the BKACE family. Homotetramer. The cofactor is Zn(2+).

It carries out the reaction 3-dehydrocarnitine + acetyl-CoA = N,N,N-trimethylglycyl-CoA + acetoacetate. The protein operates within amine and polyamine metabolism; carnitine metabolism. Functionally, catalyzes the condensation of dehydrocarnitine and acetyl-CoA, forming acetoacetate and betainyl-CoA (N,N,N-trimethylglycyl-CoA). Is involved in a L-carnitine degradation pathway that allows R.meliloti to grow on L-carnitine as the sole source of carbon and nitrogen. The sequence is that of 3-dehydrocarnitine:acetyl-CoA trimethylamine transferase from Rhizobium meliloti (strain 1021) (Ensifer meliloti).